Here is a 343-residue protein sequence, read N- to C-terminus: 3-isopropylmalate dehydrogenase (343 aa).

Arg-94, Arg-104, Arg-128, and Asp-218 together coordinate substrate. Residues Asp-218, Asp-242, and Asp-246 each contribute to the Mg(2+) site. 278-290 (GSAPDIAGQNKAN) contacts NAD(+).

The protein belongs to the isocitrate and isopropylmalate dehydrogenases family. LeuB type 2 subfamily. As to quaternary structure, homodimer. Requires Mg(2+) as cofactor. The cofactor is Mn(2+).

Its subcellular location is the cytoplasm. It catalyses the reaction (2R,3S)-3-isopropylmalate + NAD(+) = 4-methyl-2-oxopentanoate + CO2 + NADH. It participates in amino-acid biosynthesis; L-leucine biosynthesis; L-leucine from 3-methyl-2-oxobutanoate: step 3/4. Catalyzes the oxidation of 3-carboxy-2-hydroxy-4-methylpentanoate (3-isopropylmalate) to 3-carboxy-4-methyl-2-oxopentanoate. The product decarboxylates to 4-methyl-2 oxopentanoate. This chain is 3-isopropylmalate dehydrogenase, found in Bifidobacterium longum (strain DJO10A).